The following is a 365-amino-acid chain: Phospho-N-acetylmuramoyl-pentapeptide-transferase (365 aa).

11 consecutive transmembrane segments (helical) span residues 15 to 35, 39 to 59, 84 to 104, 114 to 134, 156 to 176, 178 to 198, 209 to 229, 235 to 255, 263 to 283, 291 to 311, and 343 to 363; these read WPAAILIGAVISAAFVADRLI, LLSLPLMAAILVSTLITWWGV, GTPTMGGLLVVPVGVIIGGLV, LLAIALVTLAYMVIGGVDDWS, AAVLFLGWAGWQGWIAGTVSL, FNLDLPLHWLIWPLALFVFLA, LDGLASGCGALVFTGLALQLM, GDPALAGFCMAMAGCWLGFLI, VFMGDTGSLAMGAALSAVALL, LLMGGVFLAESVSVIVQVWVF, and VVVPLFWLVTAGLVMLGLGLH.

This sequence belongs to the glycosyltransferase 4 family. MraY subfamily. It depends on Mg(2+) as a cofactor.

It localises to the cell inner membrane. The enzyme catalyses UDP-N-acetyl-alpha-D-muramoyl-L-alanyl-gamma-D-glutamyl-meso-2,6-diaminopimeloyl-D-alanyl-D-alanine + di-trans,octa-cis-undecaprenyl phosphate = di-trans,octa-cis-undecaprenyl diphospho-N-acetyl-alpha-D-muramoyl-L-alanyl-D-glutamyl-meso-2,6-diaminopimeloyl-D-alanyl-D-alanine + UMP. Its pathway is cell wall biogenesis; peptidoglycan biosynthesis. Its function is as follows. Catalyzes the initial step of the lipid cycle reactions in the biosynthesis of the cell wall peptidoglycan: transfers peptidoglycan precursor phospho-MurNAc-pentapeptide from UDP-MurNAc-pentapeptide onto the lipid carrier undecaprenyl phosphate, yielding undecaprenyl-pyrophosphoryl-MurNAc-pentapeptide, known as lipid I. The chain is Phospho-N-acetylmuramoyl-pentapeptide-transferase from Synechococcus sp. (strain WH7803).